We begin with the raw amino-acid sequence, 251 residues long: Tryptophan synthase alpha chain (251 aa).

Catalysis depends on proton acceptor residues glutamate 46 and aspartate 57.

The protein belongs to the TrpA family. In terms of assembly, tetramer of two alpha and two beta chains.

It catalyses the reaction (1S,2R)-1-C-(indol-3-yl)glycerol 3-phosphate + L-serine = D-glyceraldehyde 3-phosphate + L-tryptophan + H2O. Its pathway is amino-acid biosynthesis; L-tryptophan biosynthesis; L-tryptophan from chorismate: step 5/5. Its function is as follows. The alpha subunit is responsible for the aldol cleavage of indoleglycerol phosphate to indole and glyceraldehyde 3-phosphate. The chain is Tryptophan synthase alpha chain from Karelsulcia muelleri (strain GWSS) (Sulcia muelleri).